Reading from the N-terminus, the 728-residue chain is Glutamate--cysteine ligase (728 aa).

The tract at residues 517-552 is disordered; that stretch reads PVRTTRRGGSASRSASGTSTPNSGSSRPATPPLGPV. Over residues 523-536 the composition is skewed to low complexity; that stretch reads RGGSASRSASGTST.

The protein belongs to the glutamate--cysteine ligase type 3 family.

The enzyme catalyses L-cysteine + L-glutamate + ATP = gamma-L-glutamyl-L-cysteine + ADP + phosphate + H(+). The protein operates within sulfur metabolism; glutathione biosynthesis; glutathione from L-cysteine and L-glutamate: step 1/2. In Neurospora crassa (strain ATCC 24698 / 74-OR23-1A / CBS 708.71 / DSM 1257 / FGSC 987), this protein is Glutamate--cysteine ligase (gcs-1).